We begin with the raw amino-acid sequence, 75 residues long: Protein B7 (75 aa).

The sequence is that of Protein B7 (B7) from Human herpesvirus 6B (strain Z29) (HHV-6 variant B).